A 303-amino-acid chain; its full sequence is Methionyl-tRNA formyltransferase (303 aa).

(6S)-5,6,7,8-tetrahydrofolate is bound at residue 108–111; that stretch reads SDLP.

This sequence belongs to the Fmt family.

It carries out the reaction L-methionyl-tRNA(fMet) + (6R)-10-formyltetrahydrofolate = N-formyl-L-methionyl-tRNA(fMet) + (6S)-5,6,7,8-tetrahydrofolate + H(+). Functionally, attaches a formyl group to the free amino group of methionyl-tRNA(fMet). The formyl group appears to play a dual role in the initiator identity of N-formylmethionyl-tRNA by promoting its recognition by IF2 and preventing the misappropriation of this tRNA by the elongation apparatus. This is Methionyl-tRNA formyltransferase from Rickettsia canadensis (strain McKiel).